Here is a 487-residue protein sequence, read N- to C-terminus: Ribosome biogenesis protein YTM1 (487 aa).

Residues 13-95 (VKVTFTTNEA…ETNLTLQYVR (83 aa)) form a ubiquitin-like (UBL) domain region. 5 WD repeats span residues 122 to 161 (SPAGRWSGENFSRGQERILSASYDGLLRIWNASGEVLVTA), 168 to 206 (GHSASIKAAKFISSTQIASTGMDRSVRVWKYTDPGASGQ), 217 to 256 (GHRASVDSLEVHGPSKRILTASADGSVALWSASKSSSPEA), 379 to 419 (GHTN…PASG), and 451 to 487 (GEGAKVFGVVWDRELGILSGGEDKKVQVNRGRDVVRE). The interval 253 to 277 (SPEADASLLPNAHTSKRRKVASSVT) is disordered.

This sequence belongs to the WD repeat WDR12/YTM1 family. Component of the NOP7 complex, composed of ERB1, NOP7 and YTM1. The complex is held together by ERB1, which interacts with NOP7 via its N-terminal domain and with YTM1 via a high-affinity interaction between the seven-bladed beta-propeller domains of the 2 proteins. The NOP7 complex associates with the 66S pre-ribosome. Interacts (via UBL domain) with MDN1 (via VWFA/MIDAS domain).

Its subcellular location is the nucleus. The protein localises to the nucleolus. The protein resides in the nucleoplasm. Functionally, component of the NOP7 complex, which is required for maturation of the 25S and 5.8S ribosomal RNAs and formation of the 60S ribosome. The chain is Ribosome biogenesis protein YTM1 from Podospora anserina (strain S / ATCC MYA-4624 / DSM 980 / FGSC 10383) (Pleurage anserina).